A 506-amino-acid polypeptide reads, in one-letter code: RNA-splicing ligase RtcB homolog (506 aa).

Residues Asp120, Cys123, His228, His260, and His354 each coordinate Mn(2+). Residue 227-231 coordinates GMP; sequence NHYAE. Residues 354–355, 403–406, Ser410, 429–432, and Lys505 each bind GMP; these read HN, GGTM, and HGAG. His429 acts as the GMP-histidine intermediate in catalysis.

This sequence belongs to the RtcB family. Catalytic component of the tRNA-splicing ligase complex. The cofactor is Mn(2+).

It carries out the reaction a 3'-end 3'-phospho-ribonucleotide-RNA + a 5'-end dephospho-ribonucleoside-RNA + GTP = a ribonucleotidyl-ribonucleotide-RNA + GMP + diphosphate. The catalysed reaction is a 3'-end 2',3'-cyclophospho-ribonucleotide-RNA + a 5'-end dephospho-ribonucleoside-RNA + GTP + H2O = a ribonucleotidyl-ribonucleotide-RNA + GMP + diphosphate + H(+). In terms of biological role, catalytic subunit of the tRNA-splicing ligase complex that acts by directly joining spliced tRNA halves to mature-sized tRNAs by incorporating the precursor-derived splice junction phosphate into the mature tRNA as a canonical 3',5'-phosphodiester. May act as an RNA ligase with broad substrate specificity, and may function toward other RNAs. This Drosophila melanogaster (Fruit fly) protein is RNA-splicing ligase RtcB homolog.